Reading from the N-terminus, the 157-residue chain is Arginine regulator (157 aa).

It belongs to the ArgR family.

The protein resides in the cytoplasm. The protein operates within amino-acid degradation; L-arginine degradation via ADI pathway. Regulates the transcription of the arc operon, involved in arginine catabolism. This is Arginine regulator (argR1) from Streptococcus pyogenes serotype M3 (strain SSI-1).